The primary structure comprises 404 residues: Cysteine desulfurase IscS (404 aa).

Pyridoxal 5'-phosphate-binding positions include 75-76, Asn-155, Gln-183, and 203-205; these read AT and SGH. Lys-206 carries the post-translational modification N6-(pyridoxal phosphate)lysine. Thr-243 lines the pyridoxal 5'-phosphate pocket. Catalysis depends on Cys-328, which acts as the Cysteine persulfide intermediate. Cys-328 contributes to the [2Fe-2S] cluster binding site.

This sequence belongs to the class-V pyridoxal-phosphate-dependent aminotransferase family. NifS/IscS subfamily. As to quaternary structure, homodimer. Forms a heterotetramer with IscU, interacts with other sulfur acceptors. It depends on pyridoxal 5'-phosphate as a cofactor.

The protein localises to the cytoplasm. It carries out the reaction (sulfur carrier)-H + L-cysteine = (sulfur carrier)-SH + L-alanine. It functions in the pathway cofactor biosynthesis; iron-sulfur cluster biosynthesis. Functionally, master enzyme that delivers sulfur to a number of partners involved in Fe-S cluster assembly, tRNA modification or cofactor biosynthesis. Catalyzes the removal of elemental sulfur atoms from cysteine to produce alanine. Functions as a sulfur delivery protein for Fe-S cluster synthesis onto IscU, an Fe-S scaffold assembly protein, as well as other S acceptor proteins. In Shewanella halifaxensis (strain HAW-EB4), this protein is Cysteine desulfurase IscS.